The following is a 217-amino-acid chain: tRNA (guanine-N(7)-)-methyltransferase (217 aa).

S-adenosyl-L-methionine contacts are provided by E43, D68, N101, and N123. K127 is a binding site for substrate. Positions 129 to 134 (KHNKRR) are interaction with RNA. Residues D159 and 196–199 (TEYE) each bind substrate.

Belongs to the class I-like SAM-binding methyltransferase superfamily. TrmB family.

It catalyses the reaction guanosine(46) in tRNA + S-adenosyl-L-methionine = N(7)-methylguanosine(46) in tRNA + S-adenosyl-L-homocysteine. The protein operates within tRNA modification; N(7)-methylguanine-tRNA biosynthesis. Functionally, catalyzes the formation of N(7)-methylguanine at position 46 (m7G46) in tRNA. In Clostridium botulinum (strain Okra / Type B1), this protein is tRNA (guanine-N(7)-)-methyltransferase.